The chain runs to 254 residues: Isoprenyl transferase (254 aa).

Residue Asp23 is part of the active site. Asp23 lines the Mg(2+) pocket. Residues 24–27, Trp28, Arg36, His40, and 68–70 contribute to the substrate site; these read GNGR and STE. The Proton acceptor role is filled by Asn71. Residues Trp72, Arg74, Arg191, and 197–199 each bind substrate; that span reads RIS. Glu210 is a binding site for Mg(2+).

It belongs to the UPP synthase family. As to quaternary structure, homodimer. Mg(2+) is required as a cofactor.

Functionally, catalyzes the condensation of isopentenyl diphosphate (IPP) with allylic pyrophosphates generating different type of terpenoids. This is Isoprenyl transferase from Porphyromonas gingivalis (strain ATCC BAA-308 / W83).